We begin with the raw amino-acid sequence, 1397 residues long: DNA-directed RNA polymerase subunit beta' (1397 aa).

4 residues coordinate Zn(2+): Cys75, Cys77, Cys90, and Cys93. Asp465, Asp467, and Asp469 together coordinate Mg(2+). Positions 819, 893, 900, and 903 each coordinate Zn(2+).

This sequence belongs to the RNA polymerase beta' chain family. As to quaternary structure, the RNAP catalytic core consists of 2 alpha, 1 beta, 1 beta' and 1 omega subunit. When a sigma factor is associated with the core the holoenzyme is formed, which can initiate transcription. It depends on Mg(2+) as a cofactor. Zn(2+) is required as a cofactor.

It catalyses the reaction RNA(n) + a ribonucleoside 5'-triphosphate = RNA(n+1) + diphosphate. DNA-dependent RNA polymerase catalyzes the transcription of DNA into RNA using the four ribonucleoside triphosphates as substrates. The chain is DNA-directed RNA polymerase subunit beta' from Acinetobacter baumannii (strain ACICU).